Consider the following 225-residue polypeptide: Doublesex- and mab-3-related transcription factor C1 (225 aa).

A compositionally biased stretch (basic and acidic residues) spans 1–12 (MQRPSGSREVRK). Disordered stretches follow at residues 1–49 (MQRP…SHVH) and 179–216 (QTRHQPCGMPGTAGERGLQLPNPSMPPRPASSGSLPSG). Residues 27 to 37 (RVKKHVVRRQK) are compositionally biased toward basic residues.

The protein belongs to the DMRT family.

The protein is Doublesex- and mab-3-related transcription factor C1 (Dmrtc1) of Rattus norvegicus (Rat).